Consider the following 176-residue polypeptide: ATP-dependent protease subunit HslV (176 aa).

The active site involves threonine 4. 3 residues coordinate Na(+): glycine 158, cysteine 161, and threonine 164.

This sequence belongs to the peptidase T1B family. HslV subfamily. As to quaternary structure, a double ring-shaped homohexamer of HslV is capped on each side by a ring-shaped HslU homohexamer. The assembly of the HslU/HslV complex is dependent on binding of ATP.

Its subcellular location is the cytoplasm. It carries out the reaction ATP-dependent cleavage of peptide bonds with broad specificity.. With respect to regulation, allosterically activated by HslU binding. In terms of biological role, protease subunit of a proteasome-like degradation complex believed to be a general protein degrading machinery. This is ATP-dependent protease subunit HslV from Rhizobium meliloti (strain 1021) (Ensifer meliloti).